A 90-amino-acid chain; its full sequence is Cytochrome c7 (90 aa).

A signal peptide spans 1–20 (MKRIIASLALSVFCAGLAFA). 12 residues coordinate heme: histidine 37, histidine 40, cysteine 47, cysteine 50, histidine 51, histidine 67, cysteine 70, cysteine 73, histidine 74, cysteine 84, cysteine 87, and histidine 88.

Binds 3 heme groups per subunit.

May be involved in anaerobic iron respiration. This is Cytochrome c7 from Geobacter metallireducens (strain ATCC 53774 / DSM 7210 / GS-15).